The chain runs to 438 residues: Ornithine aminotransferase car2 (438 aa).

Lys275 carries the N6-(pyridoxal phosphate)lysine modification.

This sequence belongs to the class-III pyridoxal-phosphate-dependent aminotransferase family. Requires pyridoxal 5'-phosphate as cofactor.

Its subcellular location is the cytoplasm. The protein resides in the nucleus. It carries out the reaction a 2-oxocarboxylate + L-ornithine = L-glutamate 5-semialdehyde + an L-alpha-amino acid. It participates in amino-acid biosynthesis; L-proline biosynthesis; L-glutamate 5-semialdehyde from L-ornithine: step 1/1. The polypeptide is Ornithine aminotransferase car2 (car2) (Schizosaccharomyces pombe (strain 972 / ATCC 24843) (Fission yeast)).